Reading from the N-terminus, the 337-residue chain is Inositol 2-dehydrogenase (337 aa).

It belongs to the Gfo/Idh/MocA family. In terms of assembly, homotetramer.

The catalysed reaction is myo-inositol + NAD(+) = scyllo-inosose + NADH + H(+). Its function is as follows. Involved in the oxidation of myo-inositol (MI) to 2-keto-myo-inositol (2KMI or 2-inosose). This chain is Inositol 2-dehydrogenase, found in Burkholderia lata (strain ATCC 17760 / DSM 23089 / LMG 22485 / NCIMB 9086 / R18194 / 383).